A 148-amino-acid chain; its full sequence is SsrA-binding protein (148 aa).

Belongs to the SmpB family.

It localises to the cytoplasm. Required for rescue of stalled ribosomes mediated by trans-translation. Binds to transfer-messenger RNA (tmRNA), required for stable association of tmRNA with ribosomes. tmRNA and SmpB together mimic tRNA shape, replacing the anticodon stem-loop with SmpB. tmRNA is encoded by the ssrA gene; the 2 termini fold to resemble tRNA(Ala) and it encodes a 'tag peptide', a short internal open reading frame. During trans-translation Ala-aminoacylated tmRNA acts like a tRNA, entering the A-site of stalled ribosomes, displacing the stalled mRNA. The ribosome then switches to translate the ORF on the tmRNA; the nascent peptide is terminated with the 'tag peptide' encoded by the tmRNA and targeted for degradation. The ribosome is freed to recommence translation, which seems to be the essential function of trans-translation. This Burkholderia ambifaria (strain ATCC BAA-244 / DSM 16087 / CCUG 44356 / LMG 19182 / AMMD) (Burkholderia cepacia (strain AMMD)) protein is SsrA-binding protein.